Consider the following 110-residue polypeptide: Inner membrane protein YgiZ (110 aa).

The Cytoplasmic portion of the chain corresponds to 1–8 (MLKQKIKT). Residues 9–29 (IFEALLYIMLTYWLIDSFFAF) traverse the membrane as a helical segment. The Periplasmic segment spans residues 30–53 (NKYDWMLESGGNICSIPSVSGEDR). A helical membrane pass occupies residues 54–74 (ILQAMIAAFFLLTPLIILILR). The Cytoplasmic segment spans residues 75 to 83 (KLFMREMFE). A helical transmembrane segment spans residues 84 to 104 (FWVYVFSLGICLVCGWWLFWG). Residues 105–110 (RFIFCY) lie on the Periplasmic side of the membrane.

The protein resides in the cell inner membrane. This chain is Inner membrane protein YgiZ (ygiZ), found in Escherichia coli (strain K12).